Here is a 103-residue protein sequence, read N- to C-terminus: Flagellar hook-basal body complex protein FliE (103 aa).

The protein belongs to the FliE family.

The protein resides in the bacterial flagellum basal body. The chain is Flagellar hook-basal body complex protein FliE from Yersinia pestis.